Consider the following 260-residue polypeptide: 3-methyl-2-oxobutanoate hydroxymethyltransferase (260 aa).

2 residues coordinate Mg(2+): Asp42 and Asp81. 3-methyl-2-oxobutanoate contacts are provided by residues 42-43 (DS), Asp81, and Lys109. Glu111 is a binding site for Mg(2+). Residue Glu178 is the Proton acceptor of the active site.

It belongs to the PanB family. As to quaternary structure, homodecamer; pentamer of dimers. The cofactor is Mg(2+).

Its subcellular location is the cytoplasm. The enzyme catalyses 3-methyl-2-oxobutanoate + (6R)-5,10-methylene-5,6,7,8-tetrahydrofolate + H2O = 2-dehydropantoate + (6S)-5,6,7,8-tetrahydrofolate. It participates in cofactor biosynthesis; (R)-pantothenate biosynthesis; (R)-pantoate from 3-methyl-2-oxobutanoate: step 1/2. Its function is as follows. Catalyzes the reversible reaction in which hydroxymethyl group from 5,10-methylenetetrahydrofolate is transferred onto alpha-ketoisovalerate to form ketopantoate. This is 3-methyl-2-oxobutanoate hydroxymethyltransferase from Ruthia magnifica subsp. Calyptogena magnifica.